A 413-amino-acid chain; its full sequence is Eukaryotic initiation factor 4A-11 (413 aa).

The Q motif signature appears at 40–68; sequence ESFDAMGLQENLLRGIYAYGFEKPSAIQQ. A Helicase ATP-binding domain is found at 71–241; the sequence is IVPFCKGLDV…RKFMNKPVRI (171 aa). Residue 84-91 coordinates ATP; it reads AQSGTGKT. The DEAD box signature appears at 189 to 192; it reads DEAD. Positions 252 to 413 constitute a Helicase C-terminal domain; that stretch reads GIKQFYVNVD…ELPANVADLL (162 aa).

This sequence belongs to the DEAD box helicase family. eIF4A subfamily. As to quaternary structure, eIF4F is a multi-subunit complex, the composition of which varies with external and internal environmental conditions. It is composed of at least EIF4A, EIF4E and EIF4G.

It catalyses the reaction ATP + H2O = ADP + phosphate + H(+). ATP-dependent RNA helicase which is a subunit of the eIF4F complex involved in cap recognition and is required for mRNA binding to ribosome. In the current model of translation initiation, eIF4A unwinds RNA secondary structures in the 5'-UTR of mRNAs which is necessary to allow efficient binding of the small ribosomal subunit, and subsequent scanning for the initiator codon. This is Eukaryotic initiation factor 4A-11 from Nicotiana tabacum (Common tobacco).